We begin with the raw amino-acid sequence, 491 residues long: Ketol-acid reductoisomerase (NADP(+)) (491 aa).

The 194-residue stretch at 15-208 folds into the KARI N-terminal Rossmann domain; sequence AQLGKCRFMG…GGHRAGVLES (194 aa). Residues 45-48, Arg-68, Arg-76, Ser-78, and 108-110 each bind NADP(+); these read CGAQ and DKQ. His-132 is an active-site residue. Residue Gly-158 coordinates NADP(+). 2 KARI C-terminal knotted domains span residues 209 to 344 and 345 to 484; these read SFVA…TAPQ and YEGK…MTDM. Residues Asp-217, Glu-221, Glu-389, and Glu-393 each coordinate Mg(2+). Position 414 (Ser-414) interacts with substrate.

The protein belongs to the ketol-acid reductoisomerase family. Mg(2+) serves as cofactor.

The enzyme catalyses (2R)-2,3-dihydroxy-3-methylbutanoate + NADP(+) = (2S)-2-acetolactate + NADPH + H(+). It catalyses the reaction (2R,3R)-2,3-dihydroxy-3-methylpentanoate + NADP(+) = (S)-2-ethyl-2-hydroxy-3-oxobutanoate + NADPH + H(+). It participates in amino-acid biosynthesis; L-isoleucine biosynthesis; L-isoleucine from 2-oxobutanoate: step 2/4. The protein operates within amino-acid biosynthesis; L-valine biosynthesis; L-valine from pyruvate: step 2/4. Its function is as follows. Involved in the biosynthesis of branched-chain amino acids (BCAA). Catalyzes an alkyl-migration followed by a ketol-acid reduction of (S)-2-acetolactate (S2AL) to yield (R)-2,3-dihydroxy-isovalerate. In the isomerase reaction, S2AL is rearranged via a Mg-dependent methyl migration to produce 3-hydroxy-3-methyl-2-ketobutyrate (HMKB). In the reductase reaction, this 2-ketoacid undergoes a metal-dependent reduction by NADPH to yield (R)-2,3-dihydroxy-isovalerate. In Shigella dysenteriae serotype 1 (strain Sd197), this protein is Ketol-acid reductoisomerase (NADP(+)).